We begin with the raw amino-acid sequence, 430 residues long: Hydrogenobyrinate a,c-diamide synthase (430 aa).

Residues 239–422 form the GATase cobBQ-type domain; the sequence is RIGVARDAAF…IHFYLPSDPL (184 aa). Residue C321 is the Nucleophile of the active site.

Belongs to the CobB/CbiA family. Requires Mg(2+) as cofactor.

The enzyme catalyses hydrogenobyrinate + 2 L-glutamine + 2 ATP + 2 H2O = hydrogenobyrinate a,c-diamide + 2 L-glutamate + 2 ADP + 2 phosphate + 2 H(+). The protein operates within cofactor biosynthesis; adenosylcobalamin biosynthesis; cob(II)yrinate a,c-diamide from precorrin-2 (aerobic route): step 9/10. In terms of biological role, catalyzes the ATP-dependent amidation of the two carboxylate groups at positions a and c of hydrogenobyrinate, using either L-glutamine or ammonia as the nitrogen source. This Stutzerimonas stutzeri (strain A1501) (Pseudomonas stutzeri) protein is Hydrogenobyrinate a,c-diamide synthase.